The chain runs to 227 residues: Prolactin-5A1 (227 aa).

The N-terminal stretch at Met1–Ser27 is a signal peptide. N-linked (GlcNAc...) asparagine glycosylation is present at Asn47. An intrachain disulfide couples Cys85 to Cys204.

Belongs to the somatotropin/prolactin family. As to expression, expressed specifically in placenta. Highly expressed in invasive trophoblast cells lining the central placental vessel.

Its subcellular location is the secreted. The polypeptide is Prolactin-5A1 (Prl5a1) (Rattus norvegicus (Rat)).